We begin with the raw amino-acid sequence, 425 residues long: Light-independent protochlorophyllide reductase subunit N (425 aa).

Cys17, Cys42, and Cys103 together coordinate [4Fe-4S] cluster.

The protein belongs to the BchN/ChlN family. In terms of assembly, protochlorophyllide reductase is composed of three subunits; ChlL, ChlN and ChlB. Forms a heterotetramer of two ChlB and two ChlN subunits. The cofactor is [4Fe-4S] cluster.

The enzyme catalyses chlorophyllide a + oxidized 2[4Fe-4S]-[ferredoxin] + 2 ADP + 2 phosphate = protochlorophyllide a + reduced 2[4Fe-4S]-[ferredoxin] + 2 ATP + 2 H2O. It functions in the pathway porphyrin-containing compound metabolism; chlorophyll biosynthesis (light-independent). Component of the dark-operative protochlorophyllide reductase (DPOR) that uses Mg-ATP and reduced ferredoxin to reduce ring D of protochlorophyllide (Pchlide) to form chlorophyllide a (Chlide). This reaction is light-independent. The NB-protein (ChlN-ChlB) is the catalytic component of the complex. In Parasynechococcus marenigrum (strain WH8102), this protein is Light-independent protochlorophyllide reductase subunit N.